Consider the following 364-residue polypeptide: tRNA-specific 2-thiouridylase MnmA (364 aa).

ATP-binding positions include 6-13 and leucine 32; that span reads AMSGGVDS. The Nucleophile role is filled by cysteine 101. The cysteines at positions 101 and 193 are disulfide-linked. Glycine 125 lines the ATP pocket. An interaction with tRNA region spans residues 143–145; sequence KDQ. Cysteine 193 serves as the catalytic Cysteine persulfide intermediate.

The protein belongs to the MnmA/TRMU family.

It localises to the cytoplasm. It carries out the reaction S-sulfanyl-L-cysteinyl-[protein] + uridine(34) in tRNA + AH2 + ATP = 2-thiouridine(34) in tRNA + L-cysteinyl-[protein] + A + AMP + diphosphate + H(+). Functionally, catalyzes the 2-thiolation of uridine at the wobble position (U34) of tRNA, leading to the formation of s(2)U34. The chain is tRNA-specific 2-thiouridylase MnmA from Rhodococcus opacus (strain B4).